A 353-amino-acid polypeptide reads, in one-letter code: Nicotinate-nucleotide--dimethylbenzimidazole phosphoribosyltransferase (353 aa).

The active-site Proton acceptor is E319.

It belongs to the CobT family.

It catalyses the reaction 5,6-dimethylbenzimidazole + nicotinate beta-D-ribonucleotide = alpha-ribazole 5'-phosphate + nicotinate + H(+). It participates in nucleoside biosynthesis; alpha-ribazole biosynthesis; alpha-ribazole from 5,6-dimethylbenzimidazole: step 1/2. Functionally, catalyzes the synthesis of alpha-ribazole-5'-phosphate from nicotinate mononucleotide (NAMN) and 5,6-dimethylbenzimidazole (DMB). The chain is Nicotinate-nucleotide--dimethylbenzimidazole phosphoribosyltransferase from Syntrophobacter fumaroxidans (strain DSM 10017 / MPOB).